The sequence spans 80 residues: DNA-binding protein S1FA2 (80 aa).

The Nuclear localization signal signature appears at 54–59; that stretch reads PPRKKK. A compositionally biased stretch (basic residues) spans 55–70; it reads PRKKKPVSKKKMKREK. Positions 55–80 are disordered; that stretch reads PRKKKPVSKKKMKREKLKQGVSAPGE.

The protein belongs to the S1FA transcription factor family.

It localises to the nucleus. In terms of biological role, DNA-binding protein that specifically recognizes a negative element (S1F) within the RPS1 promoter. The chain is DNA-binding protein S1FA2 (S1FA2) from Oryza sativa subsp. japonica (Rice).